We begin with the raw amino-acid sequence, 107 residues long: MSISISDSAAQRVSAFLNHRGKGLGLRLGVRTSGCSGMAYVLEFVDEINDDDIVFEDKGVKVIIDGKSMVYLDGTELDFVKEGLNEGFKFNNPNVSNECGCGESFNV.

Residues cysteine 35, cysteine 99, and cysteine 101 each coordinate Fe cation.

Belongs to the HesB/IscA family. Homodimer; may form tetramers and higher multimers. The cofactor is Fe cation.

Is able to transfer iron-sulfur clusters to apo-ferredoxin. Multiple cycles of [2Fe2S] cluster formation and transfer are observed, suggesting that IscA acts catalytically. Recruits intracellular free iron so as to provide iron for the assembly of transient iron-sulfur cluster in IscU in the presence of IscS, L-cysteine and the thioredoxin reductase system TrxA/TrxB. The sequence is that of Iron-binding protein IscA from Yersinia pestis bv. Antiqua (strain Angola).